The sequence spans 123 residues: Large ribosomal subunit protein uL29 (123 aa).

This sequence belongs to the universal ribosomal protein uL29 family.

This Babesia bovis protein is Large ribosomal subunit protein uL29 (RPL35).